The sequence spans 211 residues: Homeobox protein Rhox5 (211 aa).

The disordered stretch occupies residues 38-129 (FFQAGEGRDE…PLRRPGSTQR (92 aa)). Gly residues-rich tracts occupy residues 52-62 (GQPGEGAVGTE) and 70-84 (GGEG…GPVG). The segment covering 102–119 (HEPVAEGTESVKSEDKQM) has biased composition (basic and acidic residues). The segment at residues 119–176 (MPLRRPGSTQRRLAELERILLSSGSSSGGRSLIDGWISVCPECRNWFKIRRAAYRRNR) is a DNA-binding region (homeobox; atypical).

As to expression, highly expressed in placenta. Lower levels in testis, epididymis, ovary and skeletal muscle.

The protein localises to the nucleus. Its function is as follows. Transcription factor required for differentiation of embryonic stem cells (ESCs) into primordial germ cells. The sequence is that of Homeobox protein Rhox5 (Rhox5) from Rattus norvegicus (Rat).